A 102-amino-acid chain; its full sequence is NADH-quinone oxidoreductase subunit K (102 aa).

3 helical membrane passes run 5–25 (LGHY…GIFL), 30–50 (IIVI…NLVA), and 62–82 (VFAL…LAVL).

The protein belongs to the complex I subunit 4L family. As to quaternary structure, NDH-1 is composed of 14 different subunits. Subunits NuoA, H, J, K, L, M, N constitute the membrane sector of the complex.

Its subcellular location is the cell inner membrane. The catalysed reaction is a quinone + NADH + 5 H(+)(in) = a quinol + NAD(+) + 4 H(+)(out). NDH-1 shuttles electrons from NADH, via FMN and iron-sulfur (Fe-S) centers, to quinones in the respiratory chain. The immediate electron acceptor for the enzyme in this species is believed to be ubiquinone. Couples the redox reaction to proton translocation (for every two electrons transferred, four hydrogen ions are translocated across the cytoplasmic membrane), and thus conserves the redox energy in a proton gradient. The protein is NADH-quinone oxidoreductase subunit K of Bradyrhizobium sp. (strain BTAi1 / ATCC BAA-1182).